Here is an 869-residue protein sequence, read N- to C-terminus: DNA mismatch repair protein MutS (869 aa).

ATP is bound at residue 618 to 625; sequence GPNMGGKS.

The protein belongs to the DNA mismatch repair MutS family.

Functionally, this protein is involved in the repair of mismatches in DNA. It is possible that it carries out the mismatch recognition step. This protein has a weak ATPase activity. This is DNA mismatch repair protein MutS from Zymomonas mobilis subsp. mobilis (strain ATCC 31821 / ZM4 / CP4).